Reading from the N-terminus, the 399-residue chain is L-methionine gamma-lyase (399 aa).

Pyridoxal 5'-phosphate contacts are provided by residues Tyr59–Arg61 and Gly89–Met90. Tyr114 lines the substrate pocket. Residue Ser209–Thr211 coordinates pyridoxal 5'-phosphate. An N6-(pyridoxal phosphate)lysine modification is found at Lys212. Arg376 contributes to the substrate binding site.

This sequence belongs to the trans-sulfuration enzymes family. L-methionine gamma-lyase subfamily. As to quaternary structure, homotetramer; dimer of active dimers. Pyridoxal 5'-phosphate serves as cofactor.

It carries out the reaction L-methionine + H2O = methanethiol + 2-oxobutanoate + NH4(+). In terms of biological role, catalyzes the alpha,gamma-elimination of L-methionine to produce methanethiol, 2-oxobutanoate and ammonia. In Pseudomonas deceptionensis, this protein is L-methionine gamma-lyase.